The following is a 317-amino-acid chain: Aspartate carbamoyltransferase catalytic subunit (317 aa).

Positions 64 and 65 each coordinate carbamoyl phosphate. K92 provides a ligand contact to L-aspartate. Positions 114, 142, and 145 each coordinate carbamoyl phosphate. L-aspartate-binding residues include R176 and R230. Residues G271 and P272 each contribute to the carbamoyl phosphate site.

Belongs to the aspartate/ornithine carbamoyltransferase superfamily. ATCase family. Heterododecamer (2C3:3R2) of six catalytic PyrB chains organized as two trimers (C3), and six regulatory PyrI chains organized as three dimers (R2).

It catalyses the reaction carbamoyl phosphate + L-aspartate = N-carbamoyl-L-aspartate + phosphate + H(+). Its pathway is pyrimidine metabolism; UMP biosynthesis via de novo pathway; (S)-dihydroorotate from bicarbonate: step 2/3. In terms of biological role, catalyzes the condensation of carbamoyl phosphate and aspartate to form carbamoyl aspartate and inorganic phosphate, the committed step in the de novo pyrimidine nucleotide biosynthesis pathway. The chain is Aspartate carbamoyltransferase catalytic subunit from Nitratidesulfovibrio vulgaris (strain DP4) (Desulfovibrio vulgaris).